The chain runs to 491 residues: Blue-light-activated histidine kinase (491 aa).

Positions 19-92 (EANPFTAAVE…EIIHSALEAE (74 aa)) constitute a PAS 1 domain. Cys69 carries the post-translational modification S-4a-FMN cysteine. Residues 93-147 (QSVEIDILNYKKSGEPFWNRLHISPVKTENGELHHFVSSQLDVTLELGKLVELEK) enclose the PAC domain. Residues 159 to 230 (SSDQLQYIVE…QRSQESFATG (72 aa)) form the PAS 2 domain. The interval 286–368 (EISHRFKNSM…GHRIRTSGPE (83 aa)) is HWE histidine kinase domain. His289 carries the phosphohistidine; by autocatalysis modification.

FMN binds covalently to cysteine after exposure to blue light and this bond is spontaneously broken in the dark.

It catalyses the reaction ATP + protein L-histidine = ADP + protein N-phospho-L-histidine.. Its function is as follows. Photosensitive kinase that is involved in increased bacterial virulence upon exposure to light. The sequence is that of Blue-light-activated histidine kinase from Brucella anthropi (strain ATCC 49188 / DSM 6882 / CCUG 24695 / JCM 21032 / LMG 3331 / NBRC 15819 / NCTC 12168 / Alc 37) (Ochrobactrum anthropi).